The sequence spans 275 residues: MANYTAADVKKLRELTGSGMLDCKKALEESAGDFDKAVEILRVKGAKDVGKRAERNATEGLVAVSGNTMIEVNSETDFVAKNSEFKEFAANVADAAAAAKANSQEELAAVDVDGKTADAALQEFSAKIGEKLELRRAVTLEGDKTAVYLHQRSADLPPAVGVLVAFTGEGEAAEAAARQAAMQIAALKASYLTREDVPAEIIEKERSIAEQITREEGKPEQAIPKIVEGRLNGFYKENVLLEQSSVADSKKTVKALLDEAGVTVTSFARFEVGQA.

Positions threonine 76–valine 79 are involved in Mg(2+) ion dislocation from EF-Tu.

It belongs to the EF-Ts family.

The protein localises to the cytoplasm. Associates with the EF-Tu.GDP complex and induces the exchange of GDP to GTP. It remains bound to the aminoacyl-tRNA.EF-Tu.GTP complex up to the GTP hydrolysis stage on the ribosome. This is Elongation factor Ts from Corynebacterium glutamicum (strain R).